The chain runs to 77 residues: Defensin-like protein 4 (77 aa).

An N-terminal signal peptide occupies residues 1 to 30; the sequence is MKFSMRLISAVLFLVMIFVATGMGPVTVEA. Disulfide bonds link Cys-33–Cys-77, Cys-44–Cys-64, Cys-50–Cys-71, and Cys-54–Cys-73.

This sequence belongs to the DEFL family. As to expression, expressed in roots, siliques and seeds.

The protein resides in the secreted. In terms of biological role, confers broad-spectrum resistance to pathogens. This is Defensin-like protein 4 (PDF2.1) from Arabidopsis thaliana (Mouse-ear cress).